A 964-amino-acid chain; its full sequence is Syndetin (964 aa).

M1 carries the N-acetylmethionine modification. Residues 1 to 25 (MQKIKSLMTRQGLKSPPESLNDLGA) are disordered. S15 bears the Phosphoserine mark. 2 coiled-coil regions span residues 81–107 (LNLQELEEYRDKLKQQQSAVSKKVADL) and 216–244 (YSCISELNSKLQDTLEQIEEQLDVALSKI). Residues S494, S498, S559, and S561 each carry the phosphoserine modification. The tract at residues 532 to 563 (DEETEDVLASNGYESDEQEKSAYQDYDSDSDV) is disordered. A Glycyl lysine isopeptide (Lys-Gly) (interchain with G-Cter in SUMO1); alternate cross-link involves residue K963. Residue K963 forms a Glycyl lysine isopeptide (Lys-Gly) (interchain with G-Cter in SUMO2); alternate linkage.

It belongs to the syndetin family. As to quaternary structure, component of the endosome-associated retrograde protein (EARP) complex, composed of VPS51, VPS52, VPS53 and VPS50/Syndetin. The EARP complex interacts with EIPR1. Interacts with VPS51 and VPS53 in an EIPR1-independent manner.

The protein localises to the recycling endosome. Its subcellular location is the membrane. In terms of biological role, acts as a component of the EARP complex that is involved in endocytic recycling. The EARP complex associates with Rab4-positive endosomes and promotes recycling of internalized transferrin receptor (TFRC) to the plasma membrane. Within the EARP complex, required to tether the complex to recycling endosomes. Not involved in retrograde transport from early and late endosomes to the trans-Golgi network (TGN). The polypeptide is Syndetin (Mus musculus (Mouse)).